The primary structure comprises 189 residues: Protein jagunal homolog (189 aa).

Over 1–34 the chain is Cytoplasmic; the sequence is MSSRGVRAAGTDGNDFQNRQRIAQHYQESAQYKS. A helical membrane pass occupies residues 35-55; it reads VLKWFFVPHFLILVFMWLKVG. Residues 56–75 are Lumenal-facing; that stretch reads SEFLRYNFGWKNAFFERLDM. The helical transmembrane segment at 76–96 threads the bilayer; the sequence is PAAYPWEYVWCLSFIPIVLAL. Topologically, residues 97–105 are cytoplasmic; sequence SSFQRNKLK. The helical transmembrane segment at 106 to 126 threads the bilayer; the sequence is VLHYAYYAEFICGIFPCMIGL. Residues 127-150 are Lumenal-facing; it reads GGQLPELLEYANDMEGSNTPTFKG. The chain crosses the membrane as a helical span at residues 151 to 171; it reads IFPMVIIWYIFFAVALQIHGF. Over 172–189 the chain is Cytoplasmic; sequence SMYFMHHLAAAWAPVKRD.

This sequence belongs to the jagunal family.

It is found in the endoplasmic reticulum membrane. The sequence is that of Protein jagunal homolog from Caenorhabditis briggsae.